We begin with the raw amino-acid sequence, 227 residues long: Guanylate kinase (227 aa).

The Guanylate kinase-like domain occupies 21–199 (GNLFMVVAPS…ALAELECIVA (179 aa)). An ATP-binding site is contributed by 28–35 (APSGAGKS).

Belongs to the guanylate kinase family.

The protein resides in the cytoplasm. It catalyses the reaction GMP + ATP = GDP + ADP. In terms of biological role, essential for recycling GMP and indirectly, cGMP. This chain is Guanylate kinase, found in Burkholderia mallei (strain ATCC 23344).